Consider the following 255-residue polypeptide: Vitamin B12 import ATP-binding protein BtuD (255 aa).

Positions 2–240 (MRVKHIAVGS…AGLAEVFKTQ (239 aa)) constitute an ABC transporter domain. ATP is bound at residue 30-37 (GPNGSGKS).

Belongs to the ABC transporter superfamily. Vitamin B12 importer (TC 3.A.1.13.1) family. As to quaternary structure, the complex is composed of two ATP-binding proteins (BtuD), two transmembrane proteins (BtuC) and a solute-binding protein (BtuF).

It is found in the cell inner membrane. The catalysed reaction is an R-cob(III)alamin(out) + ATP + H2O = an R-cob(III)alamin(in) + ADP + phosphate + H(+). Part of the ABC transporter complex BtuCDF involved in vitamin B12 import. Responsible for energy coupling to the transport system. In Vibrio parahaemolyticus serotype O3:K6 (strain RIMD 2210633), this protein is Vitamin B12 import ATP-binding protein BtuD.